Here is a 504-residue protein sequence, read N- to C-terminus: Maturase K (504 aa).

This sequence belongs to the intron maturase 2 family. MatK subfamily.

The protein localises to the plastid. Its subcellular location is the chloroplast. Its function is as follows. Usually encoded in the trnK tRNA gene intron. Probably assists in splicing its own and other chloroplast group II introns. The chain is Maturase K from Gossypium barbadense (Sea Island cotton).